A 427-amino-acid chain; its full sequence is C4-dicarboxylate transport protein (427 aa).

9 consecutive transmembrane segments (helical) span residues 5–25, 44–64, 76–96, 142–162, 184–206, 222–242, 307–327, 330–350, and 352–372; these read IFSS…FLGH, LIKM…IAGM, IALL…LCVV, IGAF…LFGF, VIFG…AMAF, LIAC…GSIA, IYLT…LDLF, ITLL…TGSG, and IVLA…LALI.

It belongs to the dicarboxylate/amino acid:cation symporter (DAACS) (TC 2.A.23) family.

The protein resides in the cell inner membrane. Responsible for the transport of dicarboxylates such as succinate, fumarate, and malate from the periplasm across the membrane. This is C4-dicarboxylate transport protein from Aeromonas salmonicida (strain A449).